We begin with the raw amino-acid sequence, 537 residues long: Beta-galactoside alpha-2,6-sialyltransferase 2 (537 aa).

The Cytoplasmic segment spans residues methionine 1–arginine 10. A helical; Signal-anchor for type II membrane protein transmembrane segment spans residues leucine 11 to leucine 31. Residues aspartate 32–isoleucine 537 are Lumenal-facing. 2 disordered regions span residues threonine 83–isoleucine 117 and glycine 134–serine 202. Polar residues predominate over residues glycine 134–valine 145. Over residues glutamate 166 to valine 185 the composition is skewed to acidic residues. 3 cysteine pairs are disulfide-bonded: cysteine 265–cysteine 535, cysteine 312–cysteine 464, and cysteine 482–cysteine 493. Asparagine 353 and asparagine 373 each carry an N-linked (GlcNAc...) asparagine glycan.

It belongs to the glycosyltransferase 29 family.

It is found in the golgi apparatus. The protein resides in the golgi stack membrane. It catalyses the reaction a beta-D-galactoside + CMP-N-acetyl-beta-neuraminate = an N-acetyl-alpha-neuraminyl-(2-&gt;6)-beta-D-galactosyl derivative + CMP + H(+). In terms of biological role, transfers sialic acid from the donor of substrate CMP-sialic acid to galactose containing acceptor substrates. This chain is Beta-galactoside alpha-2,6-sialyltransferase 2 (st6gal2), found in Takifugu rubripes (Japanese pufferfish).